Here is a 371-residue protein sequence, read N- to C-terminus: tRNA-specific 2-thiouridylase MnmA (371 aa).

ATP is bound by residues 13–20 (GMSGGVDS) and Met-39. The interval 99–101 (NPD) is interaction with target base in tRNA. Cys-104 serves as the catalytic Nucleophile. Residues Cys-104 and Cys-200 are joined by a disulfide bond. Gly-128 provides a ligand contact to ATP. Residues 150–152 (KDQ) form an interaction with tRNA region. Catalysis depends on Cys-200, which acts as the Cysteine persulfide intermediate. An interaction with tRNA region spans residues 308-309 (RY).

Belongs to the MnmA/TRMU family.

It localises to the cytoplasm. The enzyme catalyses S-sulfanyl-L-cysteinyl-[protein] + uridine(34) in tRNA + AH2 + ATP = 2-thiouridine(34) in tRNA + L-cysteinyl-[protein] + A + AMP + diphosphate + H(+). Functionally, catalyzes the 2-thiolation of uridine at the wobble position (U34) of tRNA, leading to the formation of s(2)U34. This chain is tRNA-specific 2-thiouridylase MnmA, found in Bacillus anthracis.